A 413-amino-acid chain; its full sequence is S-adenosylmethionine synthase (413 aa).

His15 contacts ATP. Asp17 contributes to the Mg(2+) binding site. Residue Glu43 coordinates K(+). Positions 56 and 100 each coordinate L-methionine. Residues Gln100–Glu110 are flexible loop. ATP contacts are provided by residues Asp171 to Lys173, Lys248 to Phe249, Asp257, Arg263 to Lys264, Ala280, and Lys284. Asp257 is an L-methionine binding site. Lys288 contacts L-methionine.

Belongs to the AdoMet synthase family. In terms of assembly, homotetramer; dimer of dimers. It depends on Mg(2+) as a cofactor. K(+) serves as cofactor.

The protein localises to the cytoplasm. The enzyme catalyses L-methionine + ATP + H2O = S-adenosyl-L-methionine + phosphate + diphosphate. Its pathway is amino-acid biosynthesis; S-adenosyl-L-methionine biosynthesis; S-adenosyl-L-methionine from L-methionine: step 1/1. In terms of biological role, catalyzes the formation of S-adenosylmethionine (AdoMet) from methionine and ATP. The overall synthetic reaction is composed of two sequential steps, AdoMet formation and the subsequent tripolyphosphate hydrolysis which occurs prior to release of AdoMet from the enzyme. This chain is S-adenosylmethionine synthase, found in Prochlorococcus marinus (strain MIT 9515).